Reading from the N-terminus, the 802-residue chain is Vacuolar membrane protease (802 aa).

At 1–13 the chain is on the cytoplasmic side; the sequence is MARYNPLAFTSGP. The helical transmembrane segment at 14–34 threads the bilayer; that stretch reads VVFFITITYTALLIALLLTHL. Residues 35–357 are Vacuolar-facing; it reads TLPSYPSHPP…KVFIVFQLHT (323 aa). Residues Asn-48, Asn-102, Asn-105, and Asn-112 are each glycosylated (N-linked (GlcNAc...) asparagine). The Zn(2+) site is built by His-152 and Asp-164. Glu-198 acts as the Proton acceptor in catalysis. Zn(2+) contacts are provided by Glu-199, Glu-224, and His-297. Residues 358-378 traverse the membrane as a helical segment; sequence FFALCVTLLVVAPLTLIGLAW. Residues 379–389 lie on the Cytoplasmic side of the membrane; the sequence is SLHKADRNYLF. Residues 390–409 form a helical membrane-spanning segment; sequence ARKAFVYSADDDEPIHLYGW. Over 410–423 the chain is Vacuolar; sequence RGFFRFPIAFGIAT. Residues 424–444 form a helical membrane-spanning segment; sequence SIVVGLAMMLSAWFAVSWFLL. The Cytoplasmic portion of the chain corresponds to 445–457; it reads HGADAMRPSALQR. Residues 458–478 traverse the membrane as a helical segment; that stretch reads MYSLLWLFIGSFCLLVFFTIL. Topologically, residues 479–490 are vacuolar; the sequence is ANNHQVAAGYPS. The helical transmembrane segment at 491-511 threads the bilayer; sequence LFCFATVFLANVLSFLELFLA. Topologically, residues 512–609 are cytoplasmic; that stretch reads PPKSAYAWNV…EQEWSGKLPS (98 aa). Disordered regions lie at residues 528–554 and 570–603; these read GSRPLTSSATAARSDNRATTDDDATET and AGRRDAINEGANSQEPESRRRLDLGQPHSGEQEW. A helical transmembrane segment spans residues 610-630; it reads WIWIVQFSLLAPMIVILVGQI. The Vacuolar segment spans residues 631–649; the sequence is ALLLTSALYQTPSDGNSPL. The chain crosses the membrane as a helical span at residues 650–670; it reads YIYTSIAALAVFLVAPIGPFI. At 671-677 the chain is on the cytoplasmic side; that stretch reads HRFTHHV. A helical transmembrane segment spans residues 678–698; that stretch reads PTFLFLLCVATTIYNLVAFPF. The Vacuolar portion of the chain corresponds to 699 to 802; it reads SEQHKLKVYF…HDDSNNRGRR (104 aa). 2 N-linked (GlcNAc...) asparagine glycosylation sites follow: Asn-746 and Asn-779.

Belongs to the peptidase M28 family. Zn(2+) serves as cofactor.

Its subcellular location is the vacuole membrane. In terms of biological role, may be involved in vacuolar sorting and osmoregulation. The polypeptide is Vacuolar membrane protease (Leptosphaeria maculans (strain JN3 / isolate v23.1.3 / race Av1-4-5-6-7-8) (Blackleg fungus)).